We begin with the raw amino-acid sequence, 790 residues long: Centrosomal protein of 78 kDa (790 aa).

Disordered regions lie at residues 325 to 345 (YQWV…QRKK), 362 to 385 (GLAT…YAPN), 428 to 462 (VTVT…IKEE), 654 to 732 (AKTG…LNEP), and 756 to 790 (KTIK…AHLT). Phosphoserine occurs at positions 330 and 332. Residues 428 to 438 (VTVTVESPSSS) are compositionally biased toward low complexity. Positions 455–510 (QKTSIKEETLQEKLEECLRQLKEERVIRLKADKRVSELEHENAQLRNINFSLSEAL) form a coiled coil. Composition is skewed to basic and acidic residues over residues 693 to 708 (PSRR…KDLL) and 721 to 732 (GPGDRRSLLNEP).

The protein belongs to the CEP78 family. In terms of assembly, interacts with PLK4. Interacts with FAM161A. Interacts with IFT20; regulating IFT20 stability and localization. Interacts with TTC21A; regulating TTC21A stability and localization. Interacts with USP16; promoting USP16-dependent deubiquitination of tektins. Interacts with DCAF1/VPRBP; promoting localization of the EDVP complex to centrosomes. Interacts with CEP350; promoting CEP78 localization to centrosome and centriole. Expressed by photoreceptor cells in the retina.

It localises to the cytoplasm. It is found in the cytoskeleton. Its subcellular location is the microtubule organizing center. The protein resides in the centrosome. The protein localises to the centriole. It localises to the cilium basal body. Its function is as follows. Centriole wall protein that localizes to mature centrioles and regulates centriole and cilia biogenesis. Involved in centrosome duplication: required for efficient PLK4 centrosomal localization and PLK4-induced overduplication of centrioles. Involved in cilium biogenesis and controls cilium length. Acts as a regulator of protein stability by preventing ubiquitination of centrosomal proteins, such as CCP110 and tektins. Associates with the EDVP complex, preventing ubiquitination and degradation of CCP110. Promotes deubiquitination of tektin proteins (TEKT1, TEKT2, TEK3, TEKT4 and TEKT5) via its interaction with USP16. This Mus musculus (Mouse) protein is Centrosomal protein of 78 kDa.